We begin with the raw amino-acid sequence, 609 residues long: Kelch domain-containing protein 10 homolog (609 aa).

The disordered stretch occupies residues 103 to 146 (ASDLDEEEEEEDDDVDVDVDYGDTDSESEFEEMYSDEWTSSSDE). The segment covering 104-137 (SDLDEEEEEEDDDVDVDVDYGDTDSESEFEEMYS) has biased composition (acidic residues). Kelch repeat units follow at residues 214-277 (HLYS…IHNN), 279-334 (LISH…IHKH), 335-381 (FLYT…RYRH), 389-437 (HIFV…GNRG), 458-508 (EAFI…HSDN), and 510-554 (CMYV…YNDN). The segment at 576 to 609 (LPPQRRRRLDTSQPDPSMLISLYSNPKRARSSTQ) is disordered.

Interacts with Elongin-C; may be the substrate recognition component of an E3 ubiquitin ligase complex.

In terms of biological role, activates the Pk92B/DASK1-MAPK signaling cascade. The sequence is that of Kelch domain-containing protein 10 homolog (slim) from Drosophila melanogaster (Fruit fly).